A 279-amino-acid polypeptide reads, in one-letter code: MEDQYEKKITWTIKNFSFVQSQAIDSDIFVVGDSKWHLVAYPKGNGESTNKCLSLYLNVADFQSLPNGWKRHIKYRLTVVNQMSEKLSEQEVIQGWFYKNFHISGFQTMLPLSKLLDKNGGFLVNGDVKIVVEVGVLEVVGKSDVLEETLLVHESIDINGFQVLPSQVESVNNLFEKHPDIVSEFRSKNPLMRTTYLNDLLCLTEILCESSEELSTGDMANAYSTLTCLKKAGFKLDWLEKKLKEVCEARVQEIDEEWKDLTDLKENWSSDDEDDLNRL.

Residues 6 to 134 enclose the MATH domain; that stretch reads EKKITWTIKN…NGDVKIVVEV (129 aa). Residues 235–271 adopt a coiled-coil conformation; the sequence is KLDWLEKKLKEVCEARVQEIDEEWKDLTDLKENWSSD.

This is MATH domain and coiled-coil domain-containing protein At1g31390 from Arabidopsis thaliana (Mouse-ear cress).